Reading from the N-terminus, the 201-residue chain is Imidazoleglycerol-phosphate dehydratase (201 aa).

The protein belongs to the imidazoleglycerol-phosphate dehydratase family.

It localises to the cytoplasm. The enzyme catalyses D-erythro-1-(imidazol-4-yl)glycerol 3-phosphate = 3-(imidazol-4-yl)-2-oxopropyl phosphate + H2O. The protein operates within amino-acid biosynthesis; L-histidine biosynthesis; L-histidine from 5-phospho-alpha-D-ribose 1-diphosphate: step 6/9. The polypeptide is Imidazoleglycerol-phosphate dehydratase (Synechococcus sp. (strain CC9902)).